A 167-amino-acid polypeptide reads, in one-letter code: Transmembrane protein 229B (167 aa).

Residues 1 to 14 lie on the Cytoplasmic side of the membrane; it reads MASAEPLTALSRWY. The chain crosses the membrane as a helical span at residues 15–35; sequence LYAIHGYFCEVMFTAAWEFVV. The Extracellular segment spans residues 36–40; the sequence is NFNWK. A helical transmembrane segment spans residues 41-61; the sequence is FPGVTSVWALFIYGTSILIVE. Residues 62–73 are Cytoplasmic-facing; the sequence is RMYLRLRGRCPL. The chain crosses the membrane as a helical span at residues 74–94; the sequence is LLRCLIYTLWTYLWEFTTGFI. At 95–111 the chain is on the extracellular side; sequence LRQFNACPWDYSQFDFD. The chain crosses the membrane as a helical span at residues 112–132; the sequence is FMGLITLEYAVPWFCGALLVE. Over 133–167 the chain is Cytoplasmic; sequence QFVIRNTLRLRFDKDAEPGEPSGALALANGHVKTD.

The protein belongs to the TMEM229 family.

The protein resides in the membrane. This is Transmembrane protein 229B (TMEM229B) from Bos taurus (Bovine).